The chain runs to 103 residues: Large ribosomal subunit protein uL24 (103 aa).

This sequence belongs to the universal ribosomal protein uL24 family. In terms of assembly, part of the 50S ribosomal subunit.

One of two assembly initiator proteins, it binds directly to the 5'-end of the 23S rRNA, where it nucleates assembly of the 50S subunit. Its function is as follows. One of the proteins that surrounds the polypeptide exit tunnel on the outside of the subunit. In Haemophilus influenzae (strain PittEE), this protein is Large ribosomal subunit protein uL24.